Here is a 265-residue protein sequence, read N- to C-terminus: Methylthioribulose-1-phosphate dehydratase (265 aa).

C116 provides a ligand contact to substrate. Zn(2+) is bound by residues H134 and H136. The active-site Proton donor/acceptor is the E159. H224 contributes to the Zn(2+) binding site.

It belongs to the aldolase class II family. MtnB subfamily. Zn(2+) serves as cofactor.

It is found in the cytoplasm. It catalyses the reaction 5-(methylsulfanyl)-D-ribulose 1-phosphate = 5-methylsulfanyl-2,3-dioxopentyl phosphate + H2O. Its pathway is amino-acid biosynthesis; L-methionine biosynthesis via salvage pathway; L-methionine from S-methyl-5-thio-alpha-D-ribose 1-phosphate: step 2/6. Its function is as follows. Catalyzes the dehydration of methylthioribulose-1-phosphate (MTRu-1-P) into 2,3-diketo-5-methylthiopentyl-1-phosphate (DK-MTP-1-P). This chain is Methylthioribulose-1-phosphate dehydratase, found in Debaryomyces hansenii (strain ATCC 36239 / CBS 767 / BCRC 21394 / JCM 1990 / NBRC 0083 / IGC 2968) (Yeast).